Here is an 89-residue protein sequence, read N- to C-terminus: MSLTKEFKADVIKQFGASEKNTGKSEVQVALYTRRISDLTGHLQLHPKDKHSRRGLLMLVAKRKKMLNYVKNIDIDRYRKVIAELDLRK.

It belongs to the universal ribosomal protein uS15 family. In terms of assembly, part of the 30S ribosomal subunit. Forms a bridge to the 50S subunit in the 70S ribosome, contacting the 23S rRNA.

Functionally, one of the primary rRNA binding proteins, it binds directly to 16S rRNA where it helps nucleate assembly of the platform of the 30S subunit by binding and bridging several RNA helices of the 16S rRNA. Its function is as follows. Forms an intersubunit bridge (bridge B4) with the 23S rRNA of the 50S subunit in the ribosome. The sequence is that of Small ribosomal subunit protein uS15 from Pelodictyon phaeoclathratiforme (strain DSM 5477 / BU-1).